Here is an 876-residue protein sequence, read N- to C-terminus: Alanine--tRNA ligase (876 aa).

Zn(2+) is bound by residues His-564, His-568, Cys-666, and His-670.

It belongs to the class-II aminoacyl-tRNA synthetase family. Zn(2+) serves as cofactor.

Its subcellular location is the cytoplasm. It catalyses the reaction tRNA(Ala) + L-alanine + ATP = L-alanyl-tRNA(Ala) + AMP + diphosphate. Catalyzes the attachment of alanine to tRNA(Ala) in a two-step reaction: alanine is first activated by ATP to form Ala-AMP and then transferred to the acceptor end of tRNA(Ala). Also edits incorrectly charged Ser-tRNA(Ala) and Gly-tRNA(Ala) via its editing domain. The protein is Alanine--tRNA ligase of Porphyromonas gingivalis (strain ATCC BAA-308 / W83).